The primary structure comprises 175 residues: Ribosome-binding factor A (175 aa).

The disordered stretch occupies residues 125 to 175 (TAKHAGEADPYKSDAPEDVDIDEDDFDEEDIDLAGDDDIDEDANKDADSSK). The span at 128–139 (HAGEADPYKSDA) shows a compositional bias: basic and acidic residues. A compositionally biased stretch (acidic residues) spans 140-165 (PEDVDIDEDDFDEEDIDLAGDDDIDE). Positions 166–175 (DANKDADSSK) are enriched in basic and acidic residues.

This sequence belongs to the RbfA family. Monomer. Binds 30S ribosomal subunits, but not 50S ribosomal subunits or 70S ribosomes.

The protein resides in the cytoplasm. In terms of biological role, one of several proteins that assist in the late maturation steps of the functional core of the 30S ribosomal subunit. Associates with free 30S ribosomal subunits (but not with 30S subunits that are part of 70S ribosomes or polysomes). Required for efficient processing of 16S rRNA. May interact with the 5'-terminal helix region of 16S rRNA. The polypeptide is Ribosome-binding factor A (Pseudarthrobacter chlorophenolicus (strain ATCC 700700 / DSM 12829 / CIP 107037 / JCM 12360 / KCTC 9906 / NCIMB 13794 / A6) (Arthrobacter chlorophenolicus)).